A 409-amino-acid polypeptide reads, in one-letter code: Arginine deiminase (409 aa).

The Amidino-cysteine intermediate role is filled by Cys-397.

This sequence belongs to the arginine deiminase family.

It is found in the cytoplasm. It catalyses the reaction L-arginine + H2O = L-citrulline + NH4(+). It functions in the pathway amino-acid degradation; L-arginine degradation via ADI pathway; carbamoyl phosphate from L-arginine: step 1/2. In Metamycoplasma hominis (Mycoplasma hominis), this protein is Arginine deiminase (arcA).